The chain runs to 111 residues: Nucleoid-associated protein Cag_1190 (111 aa).

This sequence belongs to the YbaB/EbfC family. In terms of assembly, homodimer.

It is found in the cytoplasm. The protein localises to the nucleoid. Functionally, binds to DNA and alters its conformation. May be involved in regulation of gene expression, nucleoid organization and DNA protection. This Chlorobium chlorochromatii (strain CaD3) protein is Nucleoid-associated protein Cag_1190.